The primary structure comprises 260 residues: Large ribosomal subunit protein uL30 (260 aa).

Position 1 is an N-acetylmethionine (Met1). Repeat copies occupy residues 7–18 (KKKKVAAALGTL), 19–30 (KKKKVPAVPETL), 31–42 (KKKRRNFAELKV), 43–54 (KRLRKKFALKTL), and 55–66 (RKARRKLIYEKA). The interval 7–66 (KKKKVAAALGTLKKKKVPAVPETLKKKRRNFAELKVKRLRKKFALKTLRKARRKLIYEKA) is 5 X 12 AA tandem repeats. Phosphothreonine is present on Thr29. Lys136 is subject to N6-acetyllysine. N6-succinyllysine is present on Lys139. Tyr151 is subject to Phosphotyrosine.

This sequence belongs to the universal ribosomal protein uL30 family. Component of the large ribosomal subunit. Homodimer. Interacts with DHX33.

Its subcellular location is the cytoplasm. In terms of biological role, component of the large ribosomal subunit. The ribosome is a large ribonucleoprotein complex responsible for the synthesis of proteins in the cell. Binds to G-rich structures in 28S rRNA and in mRNAs. Plays a regulatory role in the translation apparatus; inhibits cell-free translation of mRNAs. This is Large ribosomal subunit protein uL30 (Rpl7) from Rattus norvegicus (Rat).